Consider the following 181-residue polypeptide: Shikimate kinase (181 aa).

17 to 22 is a binding site for ATP; that stretch reads GAGKTT. Threonine 21 is a binding site for Mg(2+). The substrate site is built by aspartate 39, arginine 63, and glycine 85. Arginine 122 provides a ligand contact to ATP. Arginine 141 is a binding site for substrate.

Belongs to the shikimate kinase family. In terms of assembly, monomer. Mg(2+) serves as cofactor.

Its subcellular location is the cytoplasm. The enzyme catalyses shikimate + ATP = 3-phosphoshikimate + ADP + H(+). The protein operates within metabolic intermediate biosynthesis; chorismate biosynthesis; chorismate from D-erythrose 4-phosphate and phosphoenolpyruvate: step 5/7. Catalyzes the specific phosphorylation of the 3-hydroxyl group of shikimic acid using ATP as a cosubstrate. The sequence is that of Shikimate kinase from Trichormus variabilis (strain ATCC 29413 / PCC 7937) (Anabaena variabilis).